The sequence spans 369 residues: 3-methylarginine biosynthesis aminotransferase ArgM (369 aa).

K216 carries the post-translational modification N6-(pyridoxal phosphate)lysine.

It belongs to the class-I pyridoxal-phosphate-dependent aminotransferase family. Requires pyridoxal 5'-phosphate as cofactor.

The catalysed reaction is L-arginine + 2-oxoglutarate = 5-guanidino-2-oxopentanoate + L-glutamate. It catalyses the reaction (3R)-5-guanidino-3-methyl-2-oxopentanoate + L-aspartate = (3R)-3-methyl-L-arginine + oxaloacetate. The protein operates within antibiotic biosynthesis. Its function is as follows. Aminotransferase involved in the formation of the rare amino acid 3-methylarginine (MeArg), which is incorporated into the peptidyl nucleoside antibiotic arginomycin. Catalyzes two rounds of transamination: the transfer of the amino group from L-arginine to 2-oxoglutarate to give glutamate and 5-guanidino-2-oxopentanoic acid, which will be methylated by ArgN. Then, ArgM specifically catalyzes transamination from the donor L-aspartate to the 5-guanidino-3-methyl-2-oxopentanoic acid produced by ArgN, generating the final product, 3-methylarginine. Cannot use arginine analogs, such as D-arginine, L-homoarginine and N-methylarginine for the first transamination. The chain is 3-methylarginine biosynthesis aminotransferase ArgM from Streptomyces arginensis.